Reading from the N-terminus, the 574-residue chain is Pyruvate kinase PKLR (574 aa).

Phosphoserine is present on residues S2, S19, S26, and S43. R116 contacts substrate. K(+) is bound by residues N118, S120, D156, and T157. 118-121 (NFSH) lines the ATP pocket. Residues R163 and K250 each coordinate ATP. Phosphoserine is present on S292. K313 provides a ligand contact to substrate. Residue E315 participates in Mn(2+) binding. G338, D339, and T371 together coordinate substrate. D339 is a binding site for Mn(2+). Beta-D-fructose 1,6-bisphosphate contacts are provided by residues 475–480 (TTTGRS), W525, R532, and 559–564 (RPGSGY).

Belongs to the pyruvate kinase family. Homotetramer. Requires Mg(2+) as cofactor. It depends on Mn(2+) as a cofactor. K(+) is required as a cofactor.

It catalyses the reaction pyruvate + ATP = phosphoenolpyruvate + ADP + H(+). It participates in carbohydrate degradation; glycolysis; pyruvate from D-glyceraldehyde 3-phosphate: step 5/5. With respect to regulation, allosterically activated by fructose 1,6-bisphosphate. Functionally, pyruvate kinase that catalyzes the conversion of phosphoenolpyruvate to pyruvate with the synthesis of ATP, and which plays a key role in glycolysis. The protein is Pyruvate kinase PKLR (PKLR) of Homo sapiens (Human).